The following is a 287-amino-acid chain: ATP synthase gamma chain (287 aa).

It belongs to the ATPase gamma chain family. In terms of assembly, F-type ATPases have 2 components, CF(1) - the catalytic core - and CF(0) - the membrane proton channel. CF(1) has five subunits: alpha(3), beta(3), gamma(1), delta(1), epsilon(1). CF(0) has three main subunits: a, b and c.

It is found in the cell inner membrane. Its function is as follows. Produces ATP from ADP in the presence of a proton gradient across the membrane. The gamma chain is believed to be important in regulating ATPase activity and the flow of protons through the CF(0) complex. The chain is ATP synthase gamma chain from Yersinia enterocolitica serotype O:8 / biotype 1B (strain NCTC 13174 / 8081).